A 436-amino-acid chain; its full sequence is Ribulose bisphosphate carboxylase large chain (436 aa).

N104 and T154 together coordinate substrate. K156 serves as the catalytic Proton acceptor. K158 serves as a coordination point for substrate. K182, D184, and E185 together coordinate Mg(2+). Residue K182 is modified to N6-carboxylysine. The Proton acceptor role is filled by H275. 3 residues coordinate substrate: R276, H308, and S360.

Belongs to the RuBisCO large chain family. Type I subfamily. As to quaternary structure, heterohexadecamer of 8 large chains and 8 small chains; disulfide-linked. The disulfide link is formed within the large subunit homodimers. Mg(2+) serves as cofactor. Post-translationally, the disulfide bond which can form in the large chain dimeric partners within the hexadecamer appears to be associated with oxidative stress and protein turnover.

The protein localises to the plastid. Its subcellular location is the chloroplast. It catalyses the reaction 2 (2R)-3-phosphoglycerate + 2 H(+) = D-ribulose 1,5-bisphosphate + CO2 + H2O. It carries out the reaction D-ribulose 1,5-bisphosphate + O2 = 2-phosphoglycolate + (2R)-3-phosphoglycerate + 2 H(+). RuBisCO catalyzes two reactions: the carboxylation of D-ribulose 1,5-bisphosphate, the primary event in carbon dioxide fixation, as well as the oxidative fragmentation of the pentose substrate in the photorespiration process. Both reactions occur simultaneously and in competition at the same active site. This is Ribulose bisphosphate carboxylase large chain from Euglena geniculata.